Here is a 424-residue protein sequence, read N- to C-terminus: MFTIITGAQFGDEGKGKIVDLLAKDYDIVARFQGGNNAGHTVRVGNEVYKLHLIPSGILLNARVLIGPGVVLNPEVLAKEIAMFEKHGIQVNAEKLGVDAKTSIIMPYHIEMDGLREESREKKIGTTKRGIGYAYIDKVARDEFRMAELVDQERFLARLEELAPQKEKEIATLGGDPKIVRDPALIERYLELGKQFATYITDVSREINKALDEGKHVMAEAAQGTHLDVIHGTQKFVTSSSTIAGSACANLGVGPTRVNNVIAIVKAYITRVGEGPLPTELTGELGERLQKAGGEFGTTTGRGRRCGWFDLPLLKKAIALNGYTEISLTKLDVLTGLNPIRICTGYTFKGENLDYPPELTADLAECMPVYEDLPGWETDLTEVKAFEELPENARNYVKRLEELMEVPINYISVGPGRAQTFKKE.

GTP contacts are provided by residues 11-17 (GDEGKGK) and 39-41 (GHT). The active-site Proton acceptor is the aspartate 12. Mg(2+)-binding residues include aspartate 12 and glycine 39. IMP is bound by residues 12 to 15 (DEGK), 37 to 40 (NAGH), threonine 127, arginine 141, glutamine 223, threonine 238, and arginine 302. Histidine 40 acts as the Proton donor in catalysis. A substrate-binding site is contributed by 298-304 (TTTGRGR). Residues arginine 304, 330–332 (KLD), and 412–414 (SVG) each bind GTP.

The protein belongs to the adenylosuccinate synthetase family. In terms of assembly, homodimer. Mg(2+) is required as a cofactor.

The protein localises to the cytoplasm. It carries out the reaction IMP + L-aspartate + GTP = N(6)-(1,2-dicarboxyethyl)-AMP + GDP + phosphate + 2 H(+). The protein operates within purine metabolism; AMP biosynthesis via de novo pathway; AMP from IMP: step 1/2. In terms of biological role, plays an important role in the de novo pathway of purine nucleotide biosynthesis. Catalyzes the first committed step in the biosynthesis of AMP from IMP. This chain is Adenylosuccinate synthetase, found in Methanosarcina barkeri (strain Fusaro / DSM 804).